The chain runs to 219 residues: MSKKNSTPLISAVNLTCIREERLLFDELSLQINAGDIVQVEGPNGSGKTSLLRILSGLSQPYDGQILYREQLISHCREEFHQNLLYFGHLSGVKGEMTAEENLDFNLALHGNKTQESLSYLAKVNLSGFEECLASHLSAGQHRRIALARLYQSNVPIWILDEPFTAIDKQGVASLERLFSLHAERGGCVILTTHQDLISIKPEQIKKITLDYSYDSAVD.

The ABC transporter domain occupies 10-218 (ISAVNLTCIR…TLDYSYDSAV (209 aa)). Residue 42-49 (GPNGSGKT) participates in ATP binding.

This sequence belongs to the ABC transporter superfamily. CcmA exporter (TC 3.A.1.107) family. In terms of assembly, the complex is composed of two ATP-binding proteins (CcmA) and two transmembrane proteins (CcmB).

It is found in the cell inner membrane. The enzyme catalyses heme b(in) + ATP + H2O = heme b(out) + ADP + phosphate + H(+). Part of the ABC transporter complex CcmAB involved in the biogenesis of c-type cytochromes; once thought to export heme, this seems not to be the case, but its exact role is uncertain. Responsible for energy coupling to the transport system. The chain is Cytochrome c biogenesis ATP-binding export protein CcmA from Colwellia psychrerythraea (strain 34H / ATCC BAA-681) (Vibrio psychroerythus).